We begin with the raw amino-acid sequence, 172 residues long: Endoribonuclease YbeY (172 aa).

H124, H128, and H134 together coordinate Zn(2+).

The protein belongs to the endoribonuclease YbeY family. Zn(2+) serves as cofactor.

Its subcellular location is the cytoplasm. Functionally, single strand-specific metallo-endoribonuclease involved in late-stage 70S ribosome quality control and in maturation of the 3' terminus of the 16S rRNA. This chain is Endoribonuclease YbeY, found in Rhodopseudomonas palustris (strain BisA53).